The chain runs to 348 residues: Dihydroorotase (348 aa).

Zn(2+) is bound by residues H17 and H19. Substrate contacts are provided by residues 19–21 and N45; that span reads HLR. Positions 103, 140, and 178 each coordinate Zn(2+). K103 is subject to N6-carboxylysine. H140 contributes to the substrate binding site. L223 lines the substrate pocket. D251 is a binding site for Zn(2+). Residue D251 is part of the active site. The substrate site is built by H255 and A267.

This sequence belongs to the metallo-dependent hydrolases superfamily. DHOase family. Class II DHOase subfamily. Homodimer. Zn(2+) is required as a cofactor.

The catalysed reaction is (S)-dihydroorotate + H2O = N-carbamoyl-L-aspartate + H(+). Its pathway is pyrimidine metabolism; UMP biosynthesis via de novo pathway; (S)-dihydroorotate from bicarbonate: step 3/3. In terms of biological role, catalyzes the reversible cyclization of carbamoyl aspartate to dihydroorotate. This is Dihydroorotase from Serratia proteamaculans (strain 568).